The following is an 812-amino-acid chain: MRHPLISLLLLIAFYSTSSEAFVPKCNSFYVRWPRVRLNFKAVAEARLSLKGCQSACSLGEDPVSPGKQLECAAVNHQASPDGFSHLCAVFQPHQLQNVDGYVEADDRFTFYWKYCLPSTRKCSGEYAFTYLSDRYMDQKSVIKWTTKANLEECLSDCLDEKSFECRSISFNRTDGGCHMSKDSQISRPEAIRLNNNPNYRIDYYENNCYNLSESFTFKHECRDNGISVSVKSRLPYTGAIYGLYDFFTCRTEPKEATEFDHFFPYQTVSKNCSDSIKYKGNEMVLEVVLSTDGIEPLYFITPEDLTYQAKCPISGVKAKDPANTKSSAHLDNRNKAMEASAHALFELLSKTGDDEALQNTFPLPLTTTTEVIRQVTTTTKKPSTTTSTKKLTTTTTTTPKPSQKPTTTTTKSPVVITTTTKTSPKPTTSPSTTTSTTTSTTIPPSTTTRKPANPRRSTIMSATSKVAIIVGKDSSFARARLFTTKHPSTQKIDVPTTTVQTSTTVPTTPSKTTATTTTTPKPTTTETATTSSSTTTVTTQKPTTVTSTTTLPSTTASTTTKTTTSTPTSPQTTTTHVGAPASSVASVAHDGSTLAGKPKVPVIFDIFHNGQPVEAVVVGTKISLSFRPHYPIPPEYVDVRGCQVEPIDPKYEWEHEPLFIIRDGCPADGVGLVCPPTHSEFGAKVSVEAFRYQTTGQVQYSCLVRICPFAPCPKNTCDDVEGCDSSYMHRYRRELSLEDIKKALEANPELASQFGISPSAFARNPSKSKNFTSVVEEQQRIALGGDYLVRRRLIVVNSEDQLRYYVRTGNI.

An N-terminal signal peptide occupies residues Met-1–Ala-21. Apple domains are found at residues Cys-26–Cys-116 and Cys-123–Cys-209. Intrachain disulfides connect Cys-26/Cys-116, Cys-53/Cys-88, Cys-57/Cys-72, Cys-123/Cys-209, Cys-154/Cys-178, and Cys-158/Cys-166. Residues Asn-172, Asn-211, and Asn-272 are each glycosylated (N-linked (GlcNAc...) asparagine). Residues Glu-221 to Asp-725 form the ZP domain. Composition is skewed to low complexity over residues Gln-375–Thr-449 and Pro-496–Ser-584. 2 disordered regions span residues Gln-375–Met-461 and Asp-494–Ser-584. An N-linked (GlcNAc...) asparagine glycan is attached at Asn-771.

Post-translationally, cleaved at the C-terminal domain. In terms of tissue distribution, expressed in external cuticle-producing epithelial cells including the epidermis, vulva, rectum, excretory duct and excretory pore.

Its subcellular location is the apical cell membrane. The protein resides in the secreted. The protein localises to the extracellular space. In terms of biological role, required for epithelial tube development and shaping. Involved in the morphogenesis and function of the three unicellular tubes of the excretory system, the canal cell, the duct cell and the pore cell. Also plays a role in cuticle development, alae formation and shaping of the vulval lumen. Required for larval development. This is Protein let-653 from Caenorhabditis elegans.